The primary structure comprises 283 residues: MTTPSLQTTIEAAWESREGVTLETRGAVRDAVEAVLDGLDAGIYRVAEKIGETWVVHQWLKMAVLLSFRLNDMTPVSGAPGGATWWDKVPSKFAGWGEDRFRAAGFRAVPGAIVRRSAHIAPGVVLMPSFVNLGARVESGAMIDTWATVGSCAQIGRNVHLSGGAGIGGVLEPLQAGPVIIEDNCFIGARSEVAEGVLVETGAVLSMGVFIGASTRVIDRETGEVFMGRVPAYSVVVPGSLPGKPLPDGTPGPGLACAVIVKRVDERTRSKVSINDLLRDTPR.

The substrate site is built by R107 and D144.

This sequence belongs to the transferase hexapeptide repeat family. As to quaternary structure, homotrimer.

It is found in the cytoplasm. The enzyme catalyses (S)-2,3,4,5-tetrahydrodipicolinate + succinyl-CoA + H2O = (S)-2-succinylamino-6-oxoheptanedioate + CoA. The protein operates within amino-acid biosynthesis; L-lysine biosynthesis via DAP pathway; LL-2,6-diaminopimelate from (S)-tetrahydrodipicolinate (succinylase route): step 1/3. The chain is 2,3,4,5-tetrahydropyridine-2,6-dicarboxylate N-succinyltransferase from Rhodospirillum rubrum (strain ATCC 11170 / ATH 1.1.1 / DSM 467 / LMG 4362 / NCIMB 8255 / S1).